We begin with the raw amino-acid sequence, 192 residues long: Ribosomal RNA small subunit methyltransferase G (192 aa).

S-adenosyl-L-methionine contacts are provided by residues G63, L68, 112-113 (IE), and R125.

Belongs to the methyltransferase superfamily. RNA methyltransferase RsmG family.

It localises to the cytoplasm. The enzyme catalyses guanosine(527) in 16S rRNA + S-adenosyl-L-methionine = N(7)-methylguanosine(527) in 16S rRNA + S-adenosyl-L-homocysteine. Functionally, specifically methylates the N7 position of guanine in position 527 of 16S rRNA. The chain is Ribosomal RNA small subunit methyltransferase G from Rickettsia rickettsii (strain Iowa).